A 213-amino-acid polypeptide reads, in one-letter code: ATP phosphoribosyltransferase (213 aa).

The protein belongs to the ATP phosphoribosyltransferase family. Short subfamily. As to quaternary structure, heteromultimer composed of HisG and HisZ subunits.

It localises to the cytoplasm. The enzyme catalyses 1-(5-phospho-beta-D-ribosyl)-ATP + diphosphate = 5-phospho-alpha-D-ribose 1-diphosphate + ATP. Its pathway is amino-acid biosynthesis; L-histidine biosynthesis; L-histidine from 5-phospho-alpha-D-ribose 1-diphosphate: step 1/9. Catalyzes the condensation of ATP and 5-phosphoribose 1-diphosphate to form N'-(5'-phosphoribosyl)-ATP (PR-ATP). Has a crucial role in the pathway because the rate of histidine biosynthesis seems to be controlled primarily by regulation of HisG enzymatic activity. This chain is ATP phosphoribosyltransferase, found in Listeria welshimeri serovar 6b (strain ATCC 35897 / DSM 20650 / CCUG 15529 / CIP 8149 / NCTC 11857 / SLCC 5334 / V8).